Consider the following 321-residue polypeptide: Fructose-1,6-bisphosphatase class 1 (321 aa).

Mg(2+)-binding residues include Glu93, Asp114, Leu116, and Asp117. Residues 117 to 120 (DGSS), Asn205, Tyr233, and Lys263 each bind substrate. Glu269 serves as a coordination point for Mg(2+).

It belongs to the FBPase class 1 family. Homotetramer. Requires Mg(2+) as cofactor.

The protein localises to the cytoplasm. It catalyses the reaction beta-D-fructose 1,6-bisphosphate + H2O = beta-D-fructose 6-phosphate + phosphate. Its pathway is carbohydrate biosynthesis; gluconeogenesis. In Persephonella marina (strain DSM 14350 / EX-H1), this protein is Fructose-1,6-bisphosphatase class 1.